A 42-amino-acid chain; its full sequence is Beta-defensin 13 (42 aa).

3 disulfide bridges follow: Cys-9–Cys-38, Cys-16–Cys-31, and Cys-21–Cys-39.

It belongs to the beta-defensin family. As to expression, neutrophilic granules.

It is found in the secreted. Functionally, has bactericidal activity. Active against E.coli ML35 and S.aureus 502A. This is Beta-defensin 13 (DEFB13) from Bos taurus (Bovine).